The sequence spans 286 residues: Ribonuclease H1 (286 aa).

Over residues 101–115 the composition is skewed to basic and acidic residues; the sequence is EPLDGDGHESAEPYA. Residues 101–127 are disordered; that stretch reads EPLDGDGHESAEPYAKHMKPSVEPAPP. The region spanning 136–282 is the RNase H type-1 domain; sequence MGDFVVVYTD…ADRLAREGAK (147 aa). Residues Asp-145, Glu-186, Asp-210, and Asp-274 each coordinate Mg(2+).

It belongs to the RNase H family. In terms of assembly, monomer. Mg(2+) is required as a cofactor. Ubiquitous.

It localises to the cytoplasm. It carries out the reaction Endonucleolytic cleavage to 5'-phosphomonoester.. Its activity is regulated as follows. In the presence of magnesium, manganese is inhibitory. Functionally, endonuclease that specifically degrades the RNA of RNA-DNA hybrids. Plays a role in RNA polymerase II (RNAp II) transcription termination by degrading R-loop RNA-DNA hybrid formation at G-rich pause sites located downstream of the poly(A) site and behind the elongating RNAp II. The polypeptide is Ribonuclease H1 (RNASEH1) (Homo sapiens (Human)).